Reading from the N-terminus, the 406-residue chain is Argininosuccinate synthase (406 aa).

9–17 (AYSGGLDTS) serves as a coordination point for ATP. Position 86 (Tyr86) interacts with L-citrulline. Gly116 contributes to the ATP binding site. 3 residues coordinate L-aspartate: Thr118, Asn122, and Asp123. Asn122 serves as a coordination point for L-citrulline. 5 residues coordinate L-citrulline: Arg126, Ser174, Ser183, Glu259, and Tyr271.

This sequence belongs to the argininosuccinate synthase family. Type 1 subfamily. Homotetramer.

The protein resides in the cytoplasm. The catalysed reaction is L-citrulline + L-aspartate + ATP = 2-(N(omega)-L-arginino)succinate + AMP + diphosphate + H(+). It functions in the pathway amino-acid biosynthesis; L-arginine biosynthesis; L-arginine from L-ornithine and carbamoyl phosphate: step 2/3. This chain is Argininosuccinate synthase, found in Geobacillus kaustophilus (strain HTA426).